Reading from the N-terminus, the 292-residue chain is Cyclin-dependent kinase 5 (292 aa).

The Protein kinase domain occupies 4–286; sequence YEKLEKIGEG…AEEALQHPYF (283 aa). ATP contacts are provided by residues 10-18 and lysine 33; that span reads IGEGTYGTV. Phosphotyrosine; by ABL1, EPHA4 and FYN is present on tyrosine 15. Threonine 17 bears the Phosphothreonine mark. The residue at position 56 (lysine 56) is an N6-acetyllysine. At serine 72 the chain carries Phosphoserine. Residue aspartate 126 is the Proton acceptor of the active site. Serine 159 bears the Phosphoserine mark.

It belongs to the protein kinase superfamily. CMGC Ser/Thr protein kinase family. CDC2/CDKX subfamily. Heterodimer composed of a catalytic subunit CDK5 and a regulatory subunit CDK5R1 (p25) and macromolecular complex composed of at least CDK5, CDK5R1 (p35) and CDK5RAP1 or CDK5RAP2 or CDK5RAP3. Only the heterodimer shows kinase activity. Under neurotoxic stress and neuronal injury conditions, p35 is cleaved by calpain to generate p25 that hyperactivates CDK5, that becomes functionally disabled and often toxic. Found in a trimolecular complex with CABLES1 and ABL1. Interacts with CABLES1 and CABLES2. Interacts with AATK and GSTP1. Binds to HDAC1 when in complex with p25. Interaction with myristoylation p35 promotes CDK5 association with membranes. Both isoforms 1 and 2 interacts with beta-catenin/CTNNB1. Interacts with delta-catenin/CTNND2 and APEX1. Interacts with P53/TP53 in neurons. Interacts with PTK2/FAK1. Interacts with EPHA4; may mediate the activation of NGEF by EPHA4. The complex p35/CDK5 interacts with CLOCK. Interacts with HTR6. Post-translationally, phosphorylation on Tyr-15 by ABL1 and FYN, and on Ser-159 by casein kinase 1 promotes kinase activity. By contrast, phosphorylation at Thr-14 inhibits activity. Phosphorylation at Ser-159 is essential for maximal catalytic activity. In terms of tissue distribution, expressed in hippocampal neuronal synaptic termini (at protein level). Expressed predominantly in post-mitotic neurons of the central and peripheral nervous system.

It is found in the cytoplasm. Its subcellular location is the nucleus. The protein resides in the cell membrane. It localises to the perikaryon. The protein localises to the cell projection. It is found in the lamellipodium. Its subcellular location is the growth cone. The protein resides in the postsynaptic density. It localises to the synapse. It catalyses the reaction L-seryl-[protein] + ATP = O-phospho-L-seryl-[protein] + ADP + H(+). The enzyme catalyses L-threonyl-[protein] + ATP = O-phospho-L-threonyl-[protein] + ADP + H(+). With respect to regulation, inhibited by 2-(1-ethyl-2-hydroxyethylamino)-6-benzylamino-9-isopropylpurine (roscovitine), 1-isopropyl-4-aminobenzyl-6-ether-linked benzimidazoles, resveratrol, AT-7519 and olomoucine. Activated by CDK5R1 (p35) and CDK5R2 (p39) during the development of the nervous system; degradation of CDK5R1 (p35) and CDK5R2 (p39) by proteasome result in down regulation of kinase activity, during this process, CDK5 phosphorylates p35 and induces its ubiquitination and subsequent degradation. Kinase activity is mainly determined by the amount of p35 available and subcellular location; reversible association to plasma membrane inhibits activity. Long-term inactivation as well as CDK5R1 (p25)-mediated hyperactivation of CDK5 triggers cell death. The pro-death activity of hyperactivated CDK5 is suppressed by membrane association of CDK5, via myristoylation of p35. Brain-derived neurotrophic factor, glial-derived neurotrophic factor, nerve growth factor (NGF), retinoic acid, laminin and neuregulin promote activity. Neurotoxicity enhances nuclear activity, thus leading to MEF2 phosphorylation and inhibition prior to apoptosis of cortical neurons. Repression by GSTP1 via p25/p35 translocation prevents neurodegeneration. Proline-directed serine/threonine-protein kinase essential for neuronal cell cycle arrest and differentiation and may be involved in apoptotic cell death in neuronal diseases by triggering abortive cell cycle re-entry. Interacts with D1 and D3-type G1 cyclins. Phosphorylates SRC, NOS3, VIM/vimentin, p35/CDK5R1, MEF2A, SIPA1L1, SH3GLB1, PXN, PAK1, MCAM/MUC18, SEPT5, SYN1, DNM1, AMPH, SYNJ1, CDK16, RAC1, RHOA, CDC42, TONEBP/NFAT5, MAPT/TAU, MAP1B, histone H1, p53/TP53, HDAC1, APEX1, PTK2/FAK1, huntingtin/HTT, ATM, MAP2, NEFH and NEFM. Regulates several neuronal development and physiological processes including neuronal survival, migration and differentiation, axonal and neurite growth, synaptogenesis, oligodendrocyte differentiation, synaptic plasticity and neurotransmission, by phosphorylating key proteins. Negatively regulates the CACNA1B/CAV2.2 -mediated Ca(2+) release probability at hippocampal neuronal soma and synaptic terminals. Activated by interaction with CDK5R1 (p35) and CDK5R2 (p39), especially in postmitotic neurons, and promotes CDK5R1 (p35) expression in an autostimulation loop. Phosphorylates many downstream substrates such as Rho and Ras family small GTPases (e.g. PAK1, RAC1, RHOA, CDC42) or microtubule-binding proteins (e.g. MAPT/TAU, MAP2, MAP1B), and modulates actin dynamics to regulate neurite growth and/or spine morphogenesis. Also phosphorylates exocytosis associated proteins such as MCAM/MUC18, SEPT5, SYN1, and CDK16/PCTAIRE1 as well as endocytosis associated proteins such as DNM1, AMPH and SYNJ1 at synaptic terminals. In the mature central nervous system (CNS), regulates neurotransmitter movements by phosphorylating substrates associated with neurotransmitter release and synapse plasticity; synaptic vesicle exocytosis, vesicles fusion with the presynaptic membrane, and endocytosis. Promotes cell survival by activating anti-apoptotic proteins BCL2 and STAT3, and negatively regulating of JNK3/MAPK10 activity. Phosphorylation of p53/TP53 in response to genotoxic and oxidative stresses enhances its stabilization by preventing ubiquitin ligase-mediated proteasomal degradation, and induces transactivation of p53/TP53 target genes, thus regulating apoptosis. Phosphorylation of p35/CDK5R1 enhances its stabilization by preventing calpain-mediated proteolysis producing p25/CDK5R1 and avoiding ubiquitin ligase-mediated proteasomal degradation. During aberrant cell-cycle activity and DNA damage, p25/CDK5 activity elicits cell-cycle activity and double-strand DNA breaks that precedes neuronal death by deregulating HDAC1. DNA damage triggered phosphorylation of huntingtin/HTT in nuclei of neurons protects neurons against polyglutamine expansion as well as DNA damage mediated toxicity. Phosphorylation of PXN reduces its interaction with PTK2/FAK1 in matrix-cell focal adhesions (MCFA) during oligodendrocytes (OLs) differentiation. Negative regulator of Wnt/beta-catenin signaling pathway. Activator of the GAIT (IFN-gamma-activated inhibitor of translation) pathway, which suppresses expression of a post-transcriptional regulon of proinflammatory genes in myeloid cells; phosphorylates the linker domain of glutamyl-prolyl tRNA synthetase (EPRS) in a IFN-gamma-dependent manner, the initial event in assembly of the GAIT complex. Phosphorylation of SH3GLB1 is required for autophagy induction in starved neurons. Phosphorylation of TONEBP/NFAT5 in response to osmotic stress mediates its rapid nuclear localization. MEF2 is inactivated by phosphorylation in nucleus in response to neurotoxin, thus leading to neuronal apoptosis. APEX1 AP-endodeoxyribonuclease is repressed by phosphorylation, resulting in accumulation of DNA damage and contributing to neuronal death. NOS3 phosphorylation down regulates NOS3-derived nitrite (NO) levels. SRC phosphorylation mediates its ubiquitin-dependent degradation and thus leads to cytoskeletal reorganization. May regulate endothelial cell migration and angiogenesis via the modulation of lamellipodia formation. Involved in dendritic spine morphogenesis by mediating the EFNA1-EPHA4 signaling. The complex p35/CDK5 participates in the regulation of the circadian clock by modulating the function of CLOCK protein: phosphorylates CLOCK at 'Thr-451' and 'Thr-461' and regulates the transcriptional activity of the CLOCK-BMAL1 heterodimer in association with altered stability and subcellular distribution. This Rattus norvegicus (Rat) protein is Cyclin-dependent kinase 5.